The following is a 289-amino-acid chain: Carbonyl reductase [NADPH] 1 (289 aa).

An N-acetylserine modification is found at serine 2. Phosphoserine is present on serine 2. NADP(+) contacts are provided by residues 10-34 (VTGANKGIGFAIVRDLCRQFAGDVV), 63-64 (DI), and asparagine 90. Residues 95-97 (FQL) and glutamine 106 each bind glutathione. Serine 140 contacts substrate. A glutathione-binding site is contributed by 193-194 (TY). Tyrosine 194 (proton acceptor) is an active-site residue. Residues 194-198 (YGVTK) and 231-233 (VRT) contribute to the NADP(+) site. Position 239 is an N6-1-carboxyethyl lysine (lysine 239).

The protein belongs to the short-chain dehydrogenases/reductases (SDR) family. In terms of assembly, monomer. As to expression, expressed in kidney (at protein level).

Its subcellular location is the cytoplasm. The catalysed reaction is a secondary alcohol + NADP(+) = a ketone + NADPH + H(+). The enzyme catalyses prostaglandin E1 + NADP(+) = 15-oxoprostaglandin E1 + NADPH + H(+). It catalyses the reaction prostaglandin F2alpha + NADP(+) = prostaglandin E2 + NADPH + H(+). It carries out the reaction prostaglandin D2 + NADP(+) = 15-oxoprostaglandin D2 + NADPH + H(+). The catalysed reaction is prostaglandin E2 + NADP(+) = 15-oxoprostaglandin E2 + NADPH + H(+). The enzyme catalyses prostaglandin F2alpha + NADP(+) = 15-oxoprostaglandin F2alpha + NADPH + H(+). It catalyses the reaction menadione + NADPH + H(+) = menadiol + NADP(+). It carries out the reaction daunorubicin + NADPH + H(+) = 13-dihydrodaunorubicin + NADP(+). The catalysed reaction is S-nitrosoglutathione + NADPH + H(+) = S-(hydroxysulfenamide)glutathione + NADP(+). The enzyme catalyses a primary alcohol + NADP(+) = an aldehyde + NADPH + H(+). It catalyses the reaction cortisol + NADPH + H(+) = 20beta-dihydrocortisol + NADP(+). It carries out the reaction corticosterone + NADPH + H(+) = 20beta-dihydrocorticosterone + NADP(+). Functionally, NADPH-dependent reductase with broad substrate specificity. Catalyzes the reduction of a wide variety of carbonyl compounds including quinones, prostaglandins, menadione, plus various xenobiotics. Catalyzes the reduction of the antitumor anthracyclines doxorubicin and daunorubicin to the cardiotoxic compounds doxorubicinol and daunorubicinol. Can convert prostaglandin E2 to prostaglandin F2-alpha. Can bind glutathione, which explains its higher affinity for glutathione-conjugated substrates. Catalyzes the reduction of S-nitrosoglutathione. In addition, participates in the glucocorticoid metabolism by catalyzing the NADPH-dependent cortisol/corticosterone into 20beta-dihydrocortisol (20b-DHF) or 20beta-corticosterone (20b-DHB), which are weak agonists of NR3C1 and NR3C2 in adipose tissue. The polypeptide is Carbonyl reductase [NADPH] 1 (Sus scrofa (Pig)).